Here is a 409-residue protein sequence, read N- to C-terminus: Z-DNA-binding protein 1 (409 aa).

Z-binding domains follow at residues leucine 8–glycine 70 and serine 85–arginine 147. Glycyl lysine isopeptide (Lys-Gly) (interchain with G-Cter in ubiquitin) cross-links involve residues lysine 17 and lysine 43. The interval serine 59–alanine 87 is disordered. Short sequence motifs (RIP homotypic interaction motif (RHIM)) lie at residues asparagine 183–isoleucine 207 and leucine 241–aspartate 265. Disordered stretches follow at residues histidine 269–threonine 307 and glycine 323–aspartate 369. Positions proline 270–alanine 290 are enriched in low complexity. Positions glycine 337–threonine 351 are enriched in basic and acidic residues.

As to quaternary structure, homodimer. Interacts (via RIP homotypic interaction motif) with RIPK3; leading to RIPK3 activation and necroptosis; interaction is enhanced by CASP6. Interacts (via RIP homotypic interaction motif) with RIPK1. Component of the AIM2 PANoptosome complex, a multiprotein complex that drives inflammatory cell death (PANoptosis). Post-translationally, ubiquitinated; polyubiquitinated following influenza A virus (IAV) infection. Phosphorylated.

The protein resides in the cytoplasm. It is found in the nucleus. Its activity is regulated as follows. ZBP1-dependent necroptosis is normally inhibited by RIPK1: RIPK1 inhibits the ZBP1-induced activation of RIPK3 via FADD-mediated recruitment of CASP8, which cleaves RIPK1 and limits TNF-induced necroptosis. Its function is as follows. Key innate sensor that recognizes and binds Z-RNA structures, which are produced by a number of viruses, such as herpesvirus, orthomyxovirus or flavivirus, and triggers different forms of cell death. ZBP1 acts as an essential mediator of pyroptosis, necroptosis and apoptosis (PANoptosis), an integral part of host defense against pathogens, by activating RIPK3, caspase-8 (CASP8), and the NLRP3 inflammasome. Key activator of necroptosis, a programmed cell death process in response to death-inducing TNF-alpha family members, via its ability to bind Z-RNA: once activated upon Z-RNA-binding, ZBP1 interacts and stimulates RIPK3 kinase, which phosphorylates and activates MLKL, triggering execution of programmed necrosis. In addition to TNF-induced necroptosis, necroptosis can also take place in the nucleus in response to orthomyxoviruses infection: ZBP1 recognizes and binds Z-RNA structures that are produced in infected nuclei by orthomyxoviruses, such as the influenza A virus (IAV), leading to ZBP1 activation, RIPK3 stimulation and subsequent MLKL phosphorylation, triggering disruption of the nuclear envelope and leakage of cellular DNA into the cytosol. ZBP1-dependent cell death in response to IAV infection promotes interleukin-1 alpha (IL1A) induction in an NLRP3-inflammasome-independent manner: IL1A expression is required for the optimal interleukin-1 beta (IL1B) production, and together, these cytokines promote infiltration of inflammatory neutrophils to the lung, leading to the formation of neutrophil extracellular traps. In addition to its direct role in driving necroptosis via its ability to sense Z-RNAs, also involved in PANoptosis triggered in response to bacterial infection: component of the AIM2 PANoptosome complex, a multiprotein complex that triggers PANoptosis. Also acts as the apical sensor of fungal infection responsible for activating PANoptosis. Involved in CASP8-mediated cell death via its interaction with RIPK1 but independently of its ability to sense Z-RNAs. In some cell types, also able to restrict viral replication by promoting cell death-independent responses. In response to flavivirus infection in neurons, promotes a cell death-independent pathway that restricts viral replication: together with RIPK3, promotes a death-independent transcriptional program that modifies the cellular metabolism via up-regulation expression of the enzyme ACOD1/IRG1 and production of the metabolite itaconate. Itaconate inhibits the activity of succinate dehydrogenase, generating a metabolic state in neurons that suppresses replication of viral genomes. The sequence is that of Z-DNA-binding protein 1 from Rattus norvegicus (Rat).